A 229-amino-acid polypeptide reads, in one-letter code: Large ribosomal subunit protein uL1 (229 aa).

Belongs to the universal ribosomal protein uL1 family. Part of the 50S ribosomal subunit.

Its function is as follows. Binds directly to 23S rRNA. The L1 stalk is quite mobile in the ribosome, and is involved in E site tRNA release. Protein L1 is also a translational repressor protein, it controls the translation of the L11 operon by binding to its mRNA. The chain is Large ribosomal subunit protein uL1 from Enterococcus faecalis (strain ATCC 700802 / V583).